Reading from the N-terminus, the 397-residue chain is Protein PEP-RELATED DEVELOPMENT ARRESTED 1, chloroplastic (397 aa).

The transit peptide at 1-52 (MLQSIHLRFSSTPSPSKRESLIIPSVICSFPFTSSSFRPKQTQKLKRLVQFC) directs the protein to the chloroplast. A compositionally biased stretch (basic and acidic residues) spans 315 to 334 (KDEGADNLSKEDDSSTEGRK). The tract at residues 315-351 (KDEGADNLSKEDDSSTEGRKPSGLNGRGSVTGRKPLP) is disordered.

Interacts with FSD2 and MRL7. As to expression, highly expressed in young leaves, shoots and flowers. Expressed at low levels in stems and siliques.

Its subcellular location is the plastid. The protein resides in the chloroplast stroma. It localises to the chloroplast nucleoid. In terms of biological role, plays an essential role in early steps of chloroplast development. May be involved in the redox control of plastid gene expression by maintening the redox state around chloroplast nucleoids. May positively regulate plastid-encoded RNA polymerase (PEP) activity, through binding to FSD2. The sequence is that of Protein PEP-RELATED DEVELOPMENT ARRESTED 1, chloroplastic (PRDA1) from Arabidopsis thaliana (Mouse-ear cress).